Here is a 400-residue protein sequence, read N- to C-terminus: Aminomethyltransferase, mitochondrial (400 aa).

Substrate-binding residues include glutamate 221, arginine 250, and tyrosine 397.

It belongs to the GcvT family. As to quaternary structure, component of the glycine decarboxylase complex (GDC), which is composed of four proteins: P, T, L and H.

The protein localises to the mitochondrion. The enzyme catalyses N(6)-[(R)-S(8)-aminomethyldihydrolipoyl]-L-lysyl-[protein] + (6S)-5,6,7,8-tetrahydrofolate = N(6)-[(R)-dihydrolipoyl]-L-lysyl-[protein] + (6R)-5,10-methylene-5,6,7,8-tetrahydrofolate + NH4(+). In terms of biological role, the glycine cleavage system (glycine decarboxylase complex) catalyzes the degradation of glycine. This is Aminomethyltransferase, mitochondrial (GCV1) from Saccharomyces cerevisiae (strain ATCC 204508 / S288c) (Baker's yeast).